A 434-amino-acid polypeptide reads, in one-letter code: Transcription factor AP-2-epsilon (434 aa).

The segment at 30-123 (LNQGPYSSAP…GLSLDPRRDY (94 aa)) is disordered. Residues 52–62 (PYFPPPYPQPP) are compositionally biased toward pro residues. Positions 53–58 (YFPPPY) match the PPxY motif motif. Positions 81–97 (SSINSIHHQHQQPSWHT) are enriched in polar residues. Residues 278–408 (RRKAANVTLL…YLLESLKGMD (131 aa)) form an H-S-H (helix-span-helix), dimerization region. Residues 415-434 (TGNGHSAAESKSEKDIKHRK) are disordered. A compositionally biased stretch (basic and acidic residues) spans 422 to 434 (AESKSEKDIKHRK).

It belongs to the AP-2 family. In terms of assembly, binds DNA as a dimer. Can form homodimers or heterodimers with other AP-2 family members.

The protein localises to the nucleus. Sequence-specific DNA-binding protein that interacts with inducible viral and cellular enhancer elements to regulate transcription of selected genes. AP-2 factors bind to the consensus sequence 5'-GCCNNNGGC-3' and activate genes involved in a large spectrum of important biological functions. The chain is Transcription factor AP-2-epsilon from Xenopus laevis (African clawed frog).